A 349-amino-acid chain; its full sequence is Phosphate acetyltransferase (349 aa).

It belongs to the phosphate acetyltransferase and butyryltransferase family.

The protein resides in the cytoplasm. The enzyme catalyses acetyl-CoA + phosphate = acetyl phosphate + CoA. Its pathway is metabolic intermediate biosynthesis; acetyl-CoA biosynthesis; acetyl-CoA from acetate: step 2/2. The polypeptide is Phosphate acetyltransferase (pta) (Rickettsia felis (strain ATCC VR-1525 / URRWXCal2) (Rickettsia azadi)).